Consider the following 256-residue polypeptide: MTDVARILKEARDQGRMTALDYANQLFDDFMELHGDRHFADDGAVVGGIGYLDDIAVTMVGIQKGSHLQDNLFRNFGQPHPEGYRKALRLMKQAEKFGRPIITFINTAGAYPGVGAEERGQGEAIARNLFEMSDLKVPIIAIIIGEGGSGGALALAVADQVWMLENAIYAVLSPEGFASILWKDGSRATEAAELMKITAKELKRMTVIDRIIPERGYFSSEIVEMIKEHLKTEINQLRSLPLEELLENRYQRFRNF.

A CoA carboxyltransferase C-terminal domain is found at 1–236 (MTDVARILKE…KEHLKTEINQ (236 aa)).

The protein belongs to the AccA family. Acetyl-CoA carboxylase is a heterohexamer composed of biotin carboxyl carrier protein (AccB), biotin carboxylase (AccC) and two subunits each of ACCase subunit alpha (AccA) and ACCase subunit beta (AccD).

The protein localises to the cytoplasm. It carries out the reaction N(6)-carboxybiotinyl-L-lysyl-[protein] + acetyl-CoA = N(6)-biotinyl-L-lysyl-[protein] + malonyl-CoA. It participates in lipid metabolism; malonyl-CoA biosynthesis; malonyl-CoA from acetyl-CoA: step 1/1. Component of the acetyl coenzyme A carboxylase (ACC) complex. First, biotin carboxylase catalyzes the carboxylation of biotin on its carrier protein (BCCP) and then the CO(2) group is transferred by the carboxyltransferase to acetyl-CoA to form malonyl-CoA. The chain is Acetyl-coenzyme A carboxylase carboxyl transferase subunit alpha from Streptococcus uberis (strain ATCC BAA-854 / 0140J).